A 460-amino-acid polypeptide reads, in one-letter code: Endoglucanase C (460 aa).

An N-terminal signal peptide occupies residues M1 to A32. E99 acts as the Proton donor in catalysis. D155 (nucleophile) is an active-site residue. The Dockerin domain occupies K400–N460.

The protein belongs to the glycosyl hydrolase 8 (cellulase D) family. Monomer. There are two forms of the cellulase. The shorter form lacks probably the C-terminal reiterated domains.

The enzyme catalyses Endohydrolysis of (1-&gt;4)-beta-D-glucosidic linkages in cellulose, lichenin and cereal beta-D-glucans.. The protein operates within glycan metabolism; cellulose degradation. In terms of biological role, the biological conversion of cellulose to glucose generally requires three types of hydrolytic enzymes: (1) Endoglucanases which cut internal beta-1,4-glucosidic bonds; (2) Exocellobiohydrolases that cut the disaccharide cellobiose from the non-reducing end of the cellulose polymer chain; (3) Beta-1,4-glucosidases which hydrolyze the cellobiose and other short cello-oligosaccharides to glucose. The sequence is that of Endoglucanase C (celCCC) from Ruminiclostridium cellulolyticum (strain ATCC 35319 / DSM 5812 / JCM 6584 / H10) (Clostridium cellulolyticum).